The following is a 168-amino-acid chain: ATP synthase subunit b (168 aa).

A helical membrane pass occupies residues 9–29 (AIPFGTIAYTLFIFLLLLVML).

It belongs to the ATPase B chain family. F-type ATPases have 2 components, F(1) - the catalytic core - and F(0) - the membrane proton channel. F(1) has five subunits: alpha(3), beta(3), gamma(1), delta(1), epsilon(1). F(0) has three main subunits: a(1), b(2) and c(10-14). The alpha and beta chains form an alternating ring which encloses part of the gamma chain. F(1) is attached to F(0) by a central stalk formed by the gamma and epsilon chains, while a peripheral stalk is formed by the delta and b chains.

It is found in the cell membrane. In terms of biological role, f(1)F(0) ATP synthase produces ATP from ADP in the presence of a proton or sodium gradient. F-type ATPases consist of two structural domains, F(1) containing the extramembraneous catalytic core and F(0) containing the membrane proton channel, linked together by a central stalk and a peripheral stalk. During catalysis, ATP synthesis in the catalytic domain of F(1) is coupled via a rotary mechanism of the central stalk subunits to proton translocation. Functionally, component of the F(0) channel, it forms part of the peripheral stalk, linking F(1) to F(0). The polypeptide is ATP synthase subunit b (Bacillus cereus (strain ATCC 10987 / NRS 248)).